The following is a 522-amino-acid chain: DNA primase DnaG (522 aa).

Residues Asp171 to Ile257 form the Toprim domain. Residues Glu177, Asp219, and Asp221 each coordinate Mg(2+).

It belongs to the archaeal DnaG primase family. In terms of assembly, forms a ternary complex with MCM helicase and DNA. Component of the archaeal exosome complex. It depends on Mg(2+) as a cofactor.

The enzyme catalyses ssDNA + n NTP = ssDNA/pppN(pN)n-1 hybrid + (n-1) diphosphate.. Functionally, RNA polymerase that catalyzes the synthesis of short RNA molecules used as primers for DNA polymerase during DNA replication. Also part of the exosome, which is a complex involved in RNA degradation. Acts as a poly(A)-binding protein that enhances the interaction between heteromeric, adenine-rich transcripts and the exosome. This is DNA primase DnaG from Methanosarcina mazei (strain ATCC BAA-159 / DSM 3647 / Goe1 / Go1 / JCM 11833 / OCM 88) (Methanosarcina frisia).